Here is a 329-residue protein sequence, read N- to C-terminus: Malate dehydrogenase (329 aa).

G12 to G18 contributes to the NAD(+) binding site. Positions 93 and 99 each coordinate substrate. Residues N106, Q113, and V130–N132 contribute to the NAD(+) site. 2 residues coordinate substrate: N132 and R163. Catalysis depends on H188, which acts as the Proton acceptor.

Belongs to the LDH/MDH superfamily. MDH type 2 family.

It carries out the reaction (S)-malate + NAD(+) = oxaloacetate + NADH + H(+). Its function is as follows. Catalyzes the reversible oxidation of malate to oxaloacetate. This chain is Malate dehydrogenase, found in Frankia alni (strain DSM 45986 / CECT 9034 / ACN14a).